Here is a 257-residue protein sequence, read N- to C-terminus: Zinc uptake system ATP-binding protein ZurA (257 aa).

Positions 5–241 constitute an ABC transporter domain; the sequence is IEVNNVSYHY…ADRELEILAE (237 aa). 37–44 is an ATP binding site; the sequence is GPNGSGKS.

This sequence belongs to the ABC transporter superfamily.

In terms of biological role, involved in a zinc uptake transport system. The polypeptide is Zinc uptake system ATP-binding protein ZurA (zurA) (Listeria innocua serovar 6a (strain ATCC BAA-680 / CLIP 11262)).